We begin with the raw amino-acid sequence, 124 residues long: Aspartate 1-decarboxylase (124 aa).

The active-site Schiff-base intermediate with substrate; via pyruvic acid is the serine 21. Serine 21 bears the Pyruvic acid (Ser) mark. Threonine 53 contributes to the substrate binding site. Tyrosine 54 (proton donor) is an active-site residue. 69 to 71 (GAA) serves as a coordination point for substrate.

This sequence belongs to the PanD family. Heterooctamer of four alpha and four beta subunits. The cofactor is pyruvate. Post-translationally, is synthesized initially as an inactive proenzyme, which is activated by self-cleavage at a specific serine bond to produce a beta-subunit with a hydroxyl group at its C-terminus and an alpha-subunit with a pyruvoyl group at its N-terminus.

It is found in the cytoplasm. The catalysed reaction is L-aspartate + H(+) = beta-alanine + CO2. Its pathway is cofactor biosynthesis; (R)-pantothenate biosynthesis; beta-alanine from L-aspartate: step 1/1. Catalyzes the pyruvoyl-dependent decarboxylation of aspartate to produce beta-alanine. The sequence is that of Aspartate 1-decarboxylase from Dehalococcoides mccartyi (strain ATCC BAA-2266 / KCTC 15142 / 195) (Dehalococcoides ethenogenes (strain 195)).